The primary structure comprises 414 residues: Procollagen C-endopeptidase enhancer 2 (414 aa).

Residues 1–22 (MGGASACIPLCLLLATARMARP) form the signal peptide. 7 disulfide bridges follow: C32/C58, C85/C106, C153/C180, C207/C230, C296/C363, C300/C366, and C311/C414. CUB domains are found at residues 32-143 (CGGI…YSAA) and 153-267 (CGGR…YKFR). The NTR domain occupies 296 to 414 (CQQKCRRMGT…PMNALKNKQC (119 aa)). N-linked (GlcNAc...) asparagine glycosylation occurs at N354.

As to quaternary structure, interacts with heparin with high affinity, and type I or II collagen. O-glycosylated; contains sialic acid.

It is found in the secreted. Its function is as follows. Binds to the C-terminal propeptide of types I and II procollagens and may enhance the cleavage of that propeptide by BMP1. The sequence is that of Procollagen C-endopeptidase enhancer 2 (Pcolce2) from Mus musculus (Mouse).